Here is a 351-residue protein sequence, read N- to C-terminus: Porphobilinogen deaminase (351 aa).

Residue cysteine 242 is modified to S-(dipyrrolylmethanemethyl)cysteine. One can recognise an RPE1 insert domain in the interval 257–306 (PRHLSKLAYREVLEGNTEALATAAYKSNRTDASTGLTYKLPLEVEFGKVS).

Belongs to the HMBS family. As to quaternary structure, monomer. Dipyrromethane serves as cofactor.

It catalyses the reaction 4 porphobilinogen + H2O = hydroxymethylbilane + 4 NH4(+). The protein operates within porphyrin-containing compound metabolism; protoporphyrin-IX biosynthesis; coproporphyrinogen-III from 5-aminolevulinate: step 2/4. Its function is as follows. Tetrapolymerization of the monopyrrole PBG into the hydroxymethylbilane pre-uroporphyrinogen in several discrete steps. The chain is Porphobilinogen deaminase from Rickettsia conorii (strain ATCC VR-613 / Malish 7).